Reading from the N-terminus, the 450-residue chain is Chromosomal replication initiator protein DnaA (450 aa).

The interval 1–84 (MTENEQIFWN…AVDYVYEDNL (84 aa)) is domain I, interacts with DnaA modulators. Residues 84–109 (LMIEQQHQGQQGYTEQAFQQLPAVQS) are domain II. Positions 110–328 (DLNPKYSFDN…GALKDISLVA (219 aa)) are domain III, AAA+ region. 4 residues coordinate ATP: Gly-154, Gly-156, Lys-157, and Thr-158. A domain IV, binds dsDNA region spans residues 329–450 (NFKQIDTITV…EIETIKNKIK (122 aa)).

The protein belongs to the DnaA family. As to quaternary structure, oligomerizes as a right-handed, spiral filament on DNA at oriC.

It localises to the cytoplasm. Its function is as follows. Plays an essential role in the initiation and regulation of chromosomal replication. ATP-DnaA binds to the origin of replication (oriC) to initiate formation of the DNA replication initiation complex once per cell cycle. Binds the DnaA box (a 9 base pair repeat at the origin) and separates the double-stranded (ds)DNA. Forms a right-handed helical filament on oriC DNA; dsDNA binds to the exterior of the filament while single-stranded (ss)DNA is stabiized in the filament's interior. The ATP-DnaA-oriC complex binds and stabilizes one strand of the AT-rich DNA unwinding element (DUE), permitting loading of DNA polymerase. After initiation quickly degrades to an ADP-DnaA complex that is not apt for DNA replication. Binds acidic phospholipids. The polypeptide is Chromosomal replication initiator protein DnaA (Streptococcus equi subsp. zooepidemicus (strain H70)).